The sequence spans 545 residues: Glutamyl-tRNA(Gln) amidotransferase subunit B-1, chloroplastic/mitochondrial (545 aa).

It belongs to the GatB/GatE family. GatB subfamily. Subunit of the heterotrimeric GatCAB amidotransferase (AdT) complex, composed of A, B and C subunits.

Its subcellular location is the mitochondrion. It is found in the plastid. The protein resides in the chloroplast. It carries out the reaction L-glutamyl-tRNA(Gln) + L-glutamine + ATP + H2O = L-glutaminyl-tRNA(Gln) + L-glutamate + ADP + phosphate + H(+). Its function is as follows. Allows the formation of correctly charged Gln-tRNA(Gln) through the transamidation of misacylated Glu-tRNA(Gln) in chloroplasts and mitochondria. The reaction takes place in the presence of glutamine and ATP through an activated gamma-phospho-Glu-tRNA(Gln). The sequence is that of Glutamyl-tRNA(Gln) amidotransferase subunit B-1, chloroplastic/mitochondrial from Micromonas pusilla (strain CCMP1545) (Picoplanktonic green alga).